The following is a 598-amino-acid chain: Glutamine--fructose-6-phosphate aminotransferase [isomerizing] (598 aa).

C2 acts as the Nucleophile; for GATase activity in catalysis. Residues 2–219 form the Glutamine amidotransferase type-2 domain; that stretch reads CGIIGYIGPR…DGEYGIVSKD (218 aa). SIS domains are found at residues 280 to 420 and 449 to 588; these read VAEL…LVGI and IAVK…PDRP. K593 (for Fru-6P isomerization activity) is an active-site residue.

As to quaternary structure, homodimer.

It localises to the cytoplasm. The enzyme catalyses D-fructose 6-phosphate + L-glutamine = D-glucosamine 6-phosphate + L-glutamate. Catalyzes the first step in hexosamine metabolism, converting fructose-6P into glucosamine-6P using glutamine as a nitrogen source. In Pyrococcus horikoshii (strain ATCC 700860 / DSM 12428 / JCM 9974 / NBRC 100139 / OT-3), this protein is Glutamine--fructose-6-phosphate aminotransferase [isomerizing].